The following is a 308-amino-acid chain: F420-non-reducing hydrogenase subunit G (308 aa).

The protein belongs to the [NiFe]/[NiFeSe] hydrogenase small subunit family. The F420-non-reducing hydrogenase is composed of three subunits; MvhA, MvhD and MvhG. It forms a complex with the heterodisulfide reductase (hdr).

In terms of biological role, part of a complex that provides reducing equivalents for heterodisulfide reductase. The polypeptide is F420-non-reducing hydrogenase subunit G (mvhG) (Methanothermobacter marburgensis (strain ATCC BAA-927 / DSM 2133 / JCM 14651 / NBRC 100331 / OCM 82 / Marburg) (Methanobacterium thermoautotrophicum)).